A 466-amino-acid chain; its full sequence is Purple acid phosphatase 25 (466 aa).

The signal sequence occupies residues 1–21; that stretch reads MRMNKILLVFVFLSIATVINS. Asp-164 lines the Fe cation pocket. A glycan (N-linked (GlcNAc...) asparagine) is linked at Asn-172. Asp-192 and Tyr-195 together coordinate Fe cation. Asp-192 contacts Zn(2+). Zn(2+) contacts are provided by Asn-229 and His-314. Asn-229 is a substrate binding site. His-324 functions as the Proton donor in the catalytic mechanism. Residue His-351 coordinates Zn(2+). A substrate-binding site is contributed by 351–353; the sequence is HVH. His-353 lines the Fe cation pocket. N-linked (GlcNAc...) asparagine glycosylation is found at Asn-367 and Asn-424.

It belongs to the metallophosphoesterase superfamily. Purple acid phosphatase family. As to quaternary structure, homodimer. The cofactor is Fe cation. Requires Zn(2+) as cofactor. As to expression, specifically expressed in flowers.

It localises to the secreted. It catalyses the reaction a phosphate monoester + H2O = an alcohol + phosphate. The polypeptide is Purple acid phosphatase 25 (PAP25) (Arabidopsis thaliana (Mouse-ear cress)).